Consider the following 202-residue polypeptide: Imidazoleglycerol-phosphate dehydratase (202 aa).

This sequence belongs to the imidazoleglycerol-phosphate dehydratase family.

It localises to the cytoplasm. The catalysed reaction is D-erythro-1-(imidazol-4-yl)glycerol 3-phosphate = 3-(imidazol-4-yl)-2-oxopropyl phosphate + H2O. Its pathway is amino-acid biosynthesis; L-histidine biosynthesis; L-histidine from 5-phospho-alpha-D-ribose 1-diphosphate: step 6/9. This chain is Imidazoleglycerol-phosphate dehydratase, found in Synechococcus sp. (strain WH7803).